Consider the following 941-residue polypeptide: Coiled-coil domain-containing protein 39 (941 aa).

Coiled-coil stretches lie at residues 16 to 122, 164 to 273, 306 to 605, and 665 to 825; these read AIPV…ENGI, AQQD…ESEI, QLKG…EIKV, and IKAA…EEQD. The tract at residues 868–941 is disordered; it reads PTASTKGSRQ…SNVKSKKSSK (74 aa). Composition is skewed to low complexity over residues 871 to 903 and 914 to 934; these read STKGSRQSSRSPSHTSLSARSSRSTSTSTSQSS and SSSLVGSPSRPSSASSSSSNV. Phosphoserine is present on residues Ser-892 and Ser-900.

This sequence belongs to the CCDC39 family. As to expression, mainly expressed in nasal brushings and, to a lesser extent, in lungs and testis.

The protein localises to the cytoplasm. The protein resides in the cytoskeleton. It is found in the cilium axoneme. Functionally, required for assembly of dynein regulatory complex (DRC) and inner dynein arm (IDA) complexes, which are responsible for ciliary beat regulation, thereby playing a central role in motility in cilia and flagella. Probably acts together with CCDC40 to form a molecular ruler that determines the 96 nanometer (nm) repeat length and arrangements of components in cilia and flagella. Not required for outer dynein arm complexes assembly. This is Coiled-coil domain-containing protein 39 from Homo sapiens (Human).